The primary structure comprises 328 residues: uncharacterized protein (328 aa).

Positions 72–91 form a DNA-binding region, H-T-H motif; it reads ALQIRDKFNLQRVIIVPDGE.

Belongs to the SorC transcriptional regulatory family.

This is an uncharacterized protein from Escherichia coli (strain K12).